A 671-amino-acid chain; its full sequence is TBC1 domain family member 15 (671 aa).

A2 carries the post-translational modification N-acetylalanine. Residues S23, S32, S70, S205, and S257 each carry the phosphoserine modification. In terms of domain architecture, Rab-GAP TBC spans 329–539 (GLSHSLRKQA…RLWEVMWTEL (211 aa)). Phosphoserine occurs at positions 623 and 655. Residues 650 to 671 (EAKDDSPTQTLASPNACRLTPA) form a disordered region. T669 is subject to Phosphothreonine.

As to quaternary structure, interacts with non-phosphorylated form of RAB8A; phosphorylation of RAB8A at 'Thr-72' disrupts this interaction. Interacts with ARMC12. Ubiquitous, with highest expression in heart, liver and testis and lower expression in brain, spleen, lung, kidney and skeletal muscle.

The protein localises to the cytoplasm. Functionally, acts as a GTPase activating protein for RAB7A. Does not act on RAB4, RAB5 or RAB6. In Mus musculus (Mouse), this protein is TBC1 domain family member 15 (Tbc1d15).